A 250-amino-acid chain; its full sequence is 5-oxoprolinase subunit A (250 aa).

It belongs to the LamB/PxpA family. In terms of assembly, forms a complex composed of PxpA, PxpB and PxpC.

It carries out the reaction 5-oxo-L-proline + ATP + 2 H2O = L-glutamate + ADP + phosphate + H(+). Functionally, catalyzes the cleavage of 5-oxoproline to form L-glutamate coupled to the hydrolysis of ATP to ADP and inorganic phosphate. The protein is 5-oxoprolinase subunit A of Paraburkholderia phytofirmans (strain DSM 17436 / LMG 22146 / PsJN) (Burkholderia phytofirmans).